The sequence spans 763 residues: Elongation factor G, mitochondrial (763 aa).

The N-terminal 52 residues, 1-52 (MFMRLKVLEMNSIRRQTLLRQFTNVYNVVSRSARLCSQAIPKRLFYSTGSRA), are a transit peptide targeting the mitochondrion. Residues 60–347 (SRLRNIGISA…AVCDYLPNPS (288 aa)) form the tr-type G domain. GTP contacts are provided by residues 69 to 76 (AHIDSGKT), 145 to 149 (DTPGH), and 199 to 202 (NKMD).

This sequence belongs to the TRAFAC class translation factor GTPase superfamily. Classic translation factor GTPase family. EF-G/EF-2 subfamily.

It is found in the mitochondrion. It functions in the pathway protein biosynthesis; polypeptide chain elongation. Mitochondrial GTPase that catalyzes the GTP-dependent ribosomal translocation step during translation elongation. During this step, the ribosome changes from the pre-translocational (PRE) to the post-translocational (POST) state as the newly formed A-site-bound peptidyl-tRNA and P-site-bound deacylated tRNA move to the P and E sites, respectively. Catalyzes the coordinated movement of the two tRNA molecules, the mRNA and conformational changes in the ribosome. In Schizosaccharomyces japonicus (strain yFS275 / FY16936) (Fission yeast), this protein is Elongation factor G, mitochondrial (mef1).